Here is a 236-residue protein sequence, read N- to C-terminus: Pyridoxine 5'-phosphate synthase (236 aa).

Asn7 contributes to the 3-amino-2-oxopropyl phosphate binding site. 9–10 (DH) provides a ligand contact to 1-deoxy-D-xylulose 5-phosphate. Arg18 contributes to the 3-amino-2-oxopropyl phosphate binding site. Catalysis depends on His43, which acts as the Proton acceptor. Positions 45 and 50 each coordinate 1-deoxy-D-xylulose 5-phosphate. The Proton acceptor role is filled by Glu69. Thr99 is a 1-deoxy-D-xylulose 5-phosphate binding site. His190 functions as the Proton donor in the catalytic mechanism. Residues Gly191 and 212–213 (GH) each bind 3-amino-2-oxopropyl phosphate.

Belongs to the PNP synthase family. In terms of assembly, homooctamer; tetramer of dimers.

The protein resides in the cytoplasm. It carries out the reaction 3-amino-2-oxopropyl phosphate + 1-deoxy-D-xylulose 5-phosphate = pyridoxine 5'-phosphate + phosphate + 2 H2O + H(+). The protein operates within cofactor biosynthesis; pyridoxine 5'-phosphate biosynthesis; pyridoxine 5'-phosphate from D-erythrose 4-phosphate: step 5/5. Catalyzes the complicated ring closure reaction between the two acyclic compounds 1-deoxy-D-xylulose-5-phosphate (DXP) and 3-amino-2-oxopropyl phosphate (1-amino-acetone-3-phosphate or AAP) to form pyridoxine 5'-phosphate (PNP) and inorganic phosphate. The sequence is that of Pyridoxine 5'-phosphate synthase from Desulfosudis oleivorans (strain DSM 6200 / JCM 39069 / Hxd3) (Desulfococcus oleovorans).